A 67-amino-acid polypeptide reads, in one-letter code: Cysteine-rich venom protein bucarin (67 aa).

The SCP domain occupies 13–58 (VDKHNALRRSVRPTARNMLQMEWNSNAAQNAKRFADRCTFAHSPPH).

The protein belongs to the CRISP family. Contains 8 disulfide bonds. In terms of tissue distribution, expressed by the venom gland.

The protein resides in the secreted. Its function is as follows. Blocks contraction of smooth muscle elicited by high potassium-induced depolarization, but does not block caffeine-stimulated contraction. May target voltage-gated calcium channels on smooth muscle. This Bungarus candidus (Malayan krait) protein is Cysteine-rich venom protein bucarin.